A 318-amino-acid polypeptide reads, in one-letter code: Ribose-phosphate pyrophosphokinase 2 (318 aa).

Arginine 96–aspartate 101 is a binding site for ATP. Residues aspartate 128, histidine 130, aspartate 139, and aspartate 143 each coordinate Mg(2+). Histidine 130 contacts ATP. A binding of phosphoribosylpyrophosphate region spans residues lysine 212 to glycine 227.

It belongs to the ribose-phosphate pyrophosphokinase family. As to quaternary structure, homodimer. The active form is probably a hexamer composed of 3 homodimers. The cofactor is Mg(2+).

It carries out the reaction D-ribose 5-phosphate + ATP = 5-phospho-alpha-D-ribose 1-diphosphate + AMP + H(+). Its pathway is metabolic intermediate biosynthesis; 5-phospho-alpha-D-ribose 1-diphosphate biosynthesis; 5-phospho-alpha-D-ribose 1-diphosphate from D-ribose 5-phosphate (route I): step 1/1. With respect to regulation, activated by magnesium and inorganic phosphate. Competitively or non-competitively inhibited by ADP, 2,3-bisphosphoglyceride or GDP. In terms of biological role, catalyzes the synthesis of phosphoribosylpyrophosphate (PRPP) that is essential for nucleotide synthesis. The chain is Ribose-phosphate pyrophosphokinase 2 (PRPS2) from Homo sapiens (Human).